The chain runs to 175 residues: Glucagon family neuropeptides (175 aa).

A signal peptide spans 1–23; sequence MSGNVYKTLLTLLVYGLIMHCNV. The propeptide occupies 24 to 80; it reads YCSPDRWTPVPGAKLEEEVYDEDGNTLQDFALRAGAPGGGGPRPRWGRCTALYYPPG. The tract at residues 149–157 is important for receptor binding; it reads VKKYLAAVL. L157 bears the Leucine amide mark. Residue K168 is modified to Lysine amide. Residues 172–175 constitute a propeptide that is removed on maturation; that stretch reads VAYL.

Belongs to the glucagon family.

The protein localises to the secreted. Primary role of GRF is to release GH from the pituitary. Its function is as follows. PACAP is a neuropeptide involved in diverse array of physiological processes through activating the PACAP subfamily of class B1 G protein-coupled receptors: VIP receptor 1 (VIPR1), VIP receptor 2 (VIPR2), and PACAP type I receptor (ADCYAP1R1). Exerts neuroprotective and general cytoprotective effects due to anti-apoptotic, anti-inflammatory, and antioxidant actions. Promotes neuron projection development through the RAPGEF2/Rap1/B-Raf/ERK pathway. In chromaffin cells, induces long-lasting increase of intracellular calcium concentrations and neuroendocrine secretion. Involved in the control of glucose homeostasis, induces insulin secretion by pancreatic beta cells. PACAP exists in two bioactive forms from proteolysis of the same precursor protein, PACAP27 and PACAP38, which differ by eleven amino acid residues in the C-terminus. This Gallus gallus (Chicken) protein is Glucagon family neuropeptides (ADCYAP1).